We begin with the raw amino-acid sequence, 179 residues long: ATP synthase subunit delta (179 aa).

Belongs to the ATPase delta chain family. F-type ATPases have 2 components, F(1) - the catalytic core - and F(0) - the membrane proton channel. F(1) has five subunits: alpha(3), beta(3), gamma(1), delta(1), epsilon(1). F(0) has three main subunits: a(1), b(2) and c(10-14). The alpha and beta chains form an alternating ring which encloses part of the gamma chain. F(1) is attached to F(0) by a central stalk formed by the gamma and epsilon chains, while a peripheral stalk is formed by the delta and b chains.

The protein localises to the cell inner membrane. In terms of biological role, f(1)F(0) ATP synthase produces ATP from ADP in the presence of a proton or sodium gradient. F-type ATPases consist of two structural domains, F(1) containing the extramembraneous catalytic core and F(0) containing the membrane proton channel, linked together by a central stalk and a peripheral stalk. During catalysis, ATP synthesis in the catalytic domain of F(1) is coupled via a rotary mechanism of the central stalk subunits to proton translocation. This protein is part of the stalk that links CF(0) to CF(1). It either transmits conformational changes from CF(0) to CF(1) or is implicated in proton conduction. This Burkholderia multivorans (strain ATCC 17616 / 249) protein is ATP synthase subunit delta.